A 107-amino-acid polypeptide reads, in one-letter code: Nucleoid-associated protein Atu0095 (107 aa).

The disordered stretch occupies residues Lys81–Phe107. The segment covering Pro98–Phe107 has biased composition (pro residues).

It belongs to the YbaB/EbfC family. Homodimer.

The protein resides in the cytoplasm. It is found in the nucleoid. Binds to DNA and alters its conformation. May be involved in regulation of gene expression, nucleoid organization and DNA protection. The sequence is that of Nucleoid-associated protein Atu0095 from Agrobacterium fabrum (strain C58 / ATCC 33970) (Agrobacterium tumefaciens (strain C58)).